The primary structure comprises 552 residues: Chaperonin GroEL (552 aa).

ATP is bound by residues 30–33 (TLGP), Lys51, 87–91 (DGTTT), Gly415, 480–482 (NAA), and Asp496.

This sequence belongs to the chaperonin (HSP60) family. In terms of assembly, forms a cylinder of 14 subunits composed of two heptameric rings stacked back-to-back. Interacts with the co-chaperonin GroES.

It localises to the cytoplasm. The catalysed reaction is ATP + H2O + a folded polypeptide = ADP + phosphate + an unfolded polypeptide.. In terms of biological role, together with its co-chaperonin GroES, plays an essential role in assisting protein folding. The GroEL-GroES system forms a nano-cage that allows encapsulation of the non-native substrate proteins and provides a physical environment optimized to promote and accelerate protein folding. The chain is Chaperonin GroEL from Verminephrobacter eiseniae (strain EF01-2).